The primary structure comprises 35 residues: uncharacterized protein (35 aa).

Residues 14 to 34 (LAHLIGIIYLIIILGTLVMLF) form a helical membrane-spanning segment.

Its subcellular location is the endoplasmic reticulum membrane. This is an uncharacterized protein from Saccharomyces cerevisiae (strain ATCC 204508 / S288c) (Baker's yeast).